The primary structure comprises 186 residues: MSNVQNASRSSAFAAVEGDHWVESLDDGRHVLIRPLREEDRERERQFINRLSPATRHFRFLGEIKEASPALLDQLMDIDYQQSMAFVALVHEDGELREVGISRYAACCEEGQCECAVTIADDYQGLGLDAVLMRHLIDVARRNGFRQMYSVDSAANRAMRDLCCALGFVGQRDPDDSTQVIHRLAL.

The region spanning valine 31–leucine 186 is the N-acetyltransferase domain. Residues valine 117–isoleucine 119, glycine 125, asparagine 156, and aspartate 161–cysteine 163 each bind CoA.

In terms of biological role, catalyzes the transfer of an acetyl group from acetyl coenzyme A (AcCoA) to an acceptor substrate and releases both CoA and the acetylated product. It prefers the antibiotic chloramphenicol. The chain is Acetyltransferase PA5475 from Pseudomonas aeruginosa (strain ATCC 15692 / DSM 22644 / CIP 104116 / JCM 14847 / LMG 12228 / 1C / PRS 101 / PAO1).